A 226-amino-acid polypeptide reads, in one-letter code: ATP synthase subunit a (226 aa).

A run of 5 helical transmembrane segments spans residues Leu-18–Leu-38, Phe-74–Phe-94, Leu-100–Ile-120, Leu-162–Met-182, and Ile-187–Ala-207.

It belongs to the ATPase A chain family. F-type ATPases have 2 components, CF(1) - the catalytic core - and CF(0) - the membrane proton channel. CF(1) has five subunits: alpha(3), beta(3), gamma(1), delta(1), epsilon(1). CF(0) has three main subunits: a, b and c.

The protein localises to the mitochondrion inner membrane. Mitochondrial membrane ATP synthase (F(1)F(0) ATP synthase or Complex V) produces ATP from ADP in the presence of a proton gradient across the membrane which is generated by electron transport complexes of the respiratory chain. F-type ATPases consist of two structural domains, F(1) - containing the extramembraneous catalytic core and F(0) - containing the membrane proton channel, linked together by a central stalk and a peripheral stalk. During catalysis, ATP synthesis in the catalytic domain of F(1) is coupled via a rotary mechanism of the central stalk subunits to proton translocation. Key component of the proton channel; it may play a direct role in the translocation of protons across the membrane. This is ATP synthase subunit a from Aedes aegypti (Yellowfever mosquito).